The primary structure comprises 233 residues: MFAKLFLVSVLLVGVNSRYVLVEEPGYYDKQYEEQPQQWVNSRVRRQAGALTINSDGTSGAVVKVPITGNENHKFSALGSVDLTNQMKLGAATAGLAYDNVNGHGATLTKTHIPGFGDKMTAAGKVNLFHNDNHDFSAKAFATKNMPNIPQVPNFNTVGAGVDYMFKDKIGASANAAHTDFINRNDYSLGGKLNLFKTPTTSLDFNAGWKKFDTPFFKSSWEPSTSFSFSKYF.

A signal peptide spans 1-17 (MFAKLFLVSVLLVGVNS). The propeptide occupies 18–46 (RYVLVEEPGYYDKQYEEQPQQWVNSRVRR).

Belongs to the attacin/sarcotoxin-2 family.

It localises to the secreted. Hemolymph antibacterial protein. The protein is Attacin-B of Hyalophora cecropia (Cecropia moth).